The primary structure comprises 65 residues: MKKGTKVIVQRDETKYPARGTWRWFRGKKGVVVTGLIGGDEYGVSFSKGDSADAYFKAYELTERK.

The chain is Gene 51 protein (51) from Mycobacterium phage D29 (Mycobacteriophage D29).